Consider the following 264-residue polypeptide: Rano class II histocompatibility antigen, D-1 beta chain (264 aa).

A signal peptide spans 1-26 (MVWLARDSCVAAVILLLTVLSPPVAL). The tract at residues 27 to 120 (VRDPTPRFLE…EISESFLVPR (94 aa)) is beta-1. Over 27–226 (VRDPTPRFLE…AQSTSAQNKK (200 aa)) the chain is Extracellular. Disulfide bonds link cysteine 42/cysteine 106 and cysteine 144/cysteine 200. Residue asparagine 46 is glycosylated (N-linked (GlcNAc...) asparagine). Positions 121–215 (TVEPKVTVYP…SLPSPVRVEW (95 aa)) are beta-2. The Ig-like C1-type domain maps to 124-228 (PKVTVYPSKT…STSAQNKKMS (105 aa)). The segment at 216 to 226 (KAQSTSAQNKK) is connecting peptide. Residues 227–248 (MSGVGGIVLGLLFLGAGLFVYF) form a helical membrane-spanning segment. At 249–264 (RNQKGQSGLQPTGLLN) the chain is on the cytoplasmic side.

Belongs to the MHC class II family.

The protein resides in the membrane. Its function is as follows. Involved in the presentation of foreign antigens to the immune system. The sequence is that of Rano class II histocompatibility antigen, D-1 beta chain (RT1-Db1) from Rattus norvegicus (Rat).